Consider the following 250-residue polypeptide: Ribonuclease PH (250 aa).

Phosphate-binding positions include Arg86 and 124-126 (GTR).

It belongs to the RNase PH family. In terms of assembly, homohexameric ring arranged as a trimer of dimers.

It catalyses the reaction tRNA(n+1) + phosphate = tRNA(n) + a ribonucleoside 5'-diphosphate. Its function is as follows. Phosphorolytic 3'-5' exoribonuclease that plays an important role in tRNA 3'-end maturation. Removes nucleotide residues following the 3'-CCA terminus of tRNAs; can also add nucleotides to the ends of RNA molecules by using nucleoside diphosphates as substrates, but this may not be physiologically important. Probably plays a role in initiation of 16S rRNA degradation (leading to ribosome degradation) during starvation. This chain is Ribonuclease PH, found in Shouchella clausii (strain KSM-K16) (Alkalihalobacillus clausii).